A 445-amino-acid chain; its full sequence is METILQHVPVGQKVGIAFSGGLDTSAALRWMKNKGALPYAYTANLGQPDEEDYDAIPRKAMEYGAEKARLIDCRPQLANEGIAAIQSGAFHISTGGITYFNTTPLGRAVTGTMLVAAMKEDDVNIWGDGSTFKGNDIERFYRYGLLTNPALKIYKPWLDQAFIDELGGRAEMSAFMTKEGFGYKMSAEKAYSTDSNMLGATHEAKDLEHLNSGIRIVNPIMGVAFWKPEVEVKAEEVSITFDEGRPVAVNGREIADPVEMFLELNRIGGRHGLGMSDQIENRIIEAKSRGIYEAPGMALLHIAYERLVTGIHNEDTIEQYRINGLRLGRLLYQGRWFDPQAIMLRETAQRWVARAVTGTVTLELRRGNDYSILNTESPNLTYAPERLSMEKVEDAPFSPADRIGQLTMRNLDLMDTRDKLAIYSKAGLLSLGTANALPQLDGGKK.

ATP-binding positions include 17 to 25 and Ala43; that span reads AFSGGLDTS. Tyr99 provides a ligand contact to L-citrulline. Residues Gly129 and Thr131 each contribute to the ATP site. L-aspartate contacts are provided by Thr131, Asn135, and Asp136. Asn135 lines the L-citrulline pocket. ATP is bound at residue Asp136. L-citrulline contacts are provided by Arg139 and Ser192. Residue Asp194 participates in ATP binding. L-citrulline contacts are provided by Thr201, Glu203, and Glu280.

It belongs to the argininosuccinate synthase family. Type 2 subfamily. Homotetramer.

The protein resides in the cytoplasm. The catalysed reaction is L-citrulline + L-aspartate + ATP = 2-(N(omega)-L-arginino)succinate + AMP + diphosphate + H(+). The protein operates within amino-acid biosynthesis; L-arginine biosynthesis; L-arginine from L-ornithine and carbamoyl phosphate: step 2/3. This chain is Argininosuccinate synthase, found in Ralstonia pickettii (strain 12J).